Reading from the N-terminus, the 993-residue chain is Receptor-type tyrosine-protein kinase FLT3 (993 aa).

An N-terminal signal peptide occupies residues M1 to T26. Residues N27–S543 lie on the Extracellular side of the membrane. An intrachain disulfide couples C35 to C65. Residues N43 and N100 are each glycosylated (N-linked (GlcNAc...) asparagine). A disulfide bridge connects residues C103 and C114. A glycan (N-linked (GlcNAc...) asparagine) is linked at N151. Intrachain disulfides connect C199-C206, C232-C241, and C272-C330. Residues P253–T343 enclose the Ig-like C2-type domain. N306, N323, N351, and N354 each carry an N-linked (GlcNAc...) asparagine glycan. Disulfide bonds link C368–C407 and C381–C392. N-linked (GlcNAc...) asparagine glycosylation is found at N473, N502, and N541. The chain crosses the membrane as a helical span at residues F544–C563. Residues H564–S993 are Cytoplasmic-facing. Y572 carries the phosphotyrosine modification. Phosphoserine is present on S574. A phosphotyrosine; by autocatalysis mark is found at Y589, Y591, and Y599. Residues Y591–Y597 form an important for normal regulation of the kinase activity and for maintaining the kinase in an inactive state in the absence of bound ligand region. Positions L610–L943 constitute a Protein kinase domain. ATP-binding positions include L616–V624 and K644. Y726 is modified (phosphotyrosine; by autocatalysis). At S759 the chain carries Phosphoserine. Phosphotyrosine is present on residues Y768 and Y793. The active-site Proton acceptor is D811. 3 positions are modified to phosphotyrosine; by autocatalysis: Y842, Y955, and Y969. S993 carries the post-translational modification Phosphoserine.

It belongs to the protein kinase superfamily. Tyr protein kinase family. CSF-1/PDGF receptor subfamily. Monomer in the absence of bound FLT3LG. Homodimer in the presence of bound FLT3LG. Interacts with FIZ1 following ligand activation. Interacts with FES, FER, LYN, FGR, HCK, SRC and GRB2. Interacts with PTPRJ/DEP-1 and PTPN11/SHP2. Interacts with RNF115 and RNF126. In terms of assembly, (Microbial infection) Interacts with human cytomegalovirus protein UL7. In terms of processing, N-glycosylated, contains complex N-glycans with sialic acid. Autophosphorylated on several tyrosine residues in response to FLT3LG binding. FLT3LG binding also increases phosphorylation of mutant kinases that are constitutively activated. Dephosphorylated by PTPRJ/DEP-1, PTPN1, PTPN6/SHP-1, and to a lesser degree by PTPN12. Dephosphorylation is important for export from the endoplasmic reticulum and location at the cell membrane. Post-translationally, rapidly ubiquitinated by UBE2L6 and the E3 ubiquitin-protein ligase SIAH1 after autophosphorylation, leading to its proteasomal degradation. As to expression, detected in bone marrow, in hematopoietic stem cells, in myeloid progenitor cells and in granulocyte/macrophage progenitor cells (at protein level). Detected in bone marrow, liver, thymus, spleen and lymph node, and at low levels in kidney and pancreas. Highly expressed in T-cell leukemia.

It localises to the membrane. The protein resides in the endoplasmic reticulum lumen. It carries out the reaction L-tyrosyl-[protein] + ATP = O-phospho-L-tyrosyl-[protein] + ADP + H(+). Its activity is regulated as follows. Present in an inactive conformation in the absence of bound ligand. FLT3LG binding leads to dimerization and activation by autophosphorylation. Its function is as follows. Tyrosine-protein kinase that acts as a cell-surface receptor for the cytokine FLT3LG and regulates differentiation, proliferation and survival of hematopoietic progenitor cells and of dendritic cells. Promotes phosphorylation of SHC1 and AKT1, and activation of the downstream effector MTOR. Promotes activation of RAS signaling and phosphorylation of downstream kinases, including MAPK1/ERK2 and/or MAPK3/ERK1. Promotes phosphorylation of FES, FER, PTPN6/SHP, PTPN11/SHP-2, PLCG1, and STAT5A and/or STAT5B. Activation of wild-type FLT3 causes only marginal activation of STAT5A or STAT5B. Mutations that cause constitutive kinase activity promote cell proliferation and resistance to apoptosis via the activation of multiple signaling pathways. This is Receptor-type tyrosine-protein kinase FLT3 (FLT3) from Homo sapiens (Human).